Reading from the N-terminus, the 366-residue chain is Transcription factor MYB61 (366 aa).

HTH myb-type domains follow at residues 9–61 and 62–116; these read KQKL…INYL and RPDL…KKKL. 2 consecutive DNA-binding regions (H-T-H motif) follow at residues 37–61 and 89–112; these read WSSV…INYL and WSQI…NSSI. The disordered stretch occupies residues 115 to 164; it reads KLKQRGIDPNTHKPISEVESFSDKDKPTTSNNKRSGNDHKSPSSSSATNQ. A compositionally biased stretch (basic and acidic residues) spans 124–141; the sequence is NTHKPISEVESFSDKDKP.

In terms of tissue distribution, expressed specifically in guard cells. Expressed in sink tissues, such as xylem, roots and developing seeds.

The protein localises to the nucleus. Transcription factor that coordinates a small network of downstream target genes required for several aspects of plant growth and development, such as xylem formation and xylem cell differentiation, and lateral root formation. Regulates a specific set of target genes by binding DNA to the AC cis-element 5'-ACCTAC-3'. Functions as a transcriptional regulator of stomatal closure. Plays a role the regulation of stomatal pore size independently of abscisic acid (ABA). Required for seed coat mucilage deposition during the development of the seed coat epidermis. Involved in the induction of trichome initiation and branching by positively regulating GL1 and GL2. Required for gibberellin (GA) biosynthesis and degradation by positively affecting the expression of the enzymes that convert GA9 into the bioactive GA4, as well as the enzymes involved in the degradation of GA4. The chain is Transcription factor MYB61 from Arabidopsis thaliana (Mouse-ear cress).